Reading from the N-terminus, the 292-residue chain is Small ribosomal subunit biogenesis GTPase RsgA (292 aa).

The 159-residue stretch at 65 to 223 (KTELIRPTVA…VVDTPGFSSL (159 aa)) folds into the CP-type G domain. Residues 114 to 117 (NKLD) and 165 to 173 (GPSGVGKST) each bind GTP. Positions 247, 252, 254, and 260 each coordinate Zn(2+).

Belongs to the TRAFAC class YlqF/YawG GTPase family. RsgA subfamily. As to quaternary structure, monomer. Associates with 30S ribosomal subunit, binds 16S rRNA. The cofactor is Zn(2+).

The protein resides in the cytoplasm. Its function is as follows. One of several proteins that assist in the late maturation steps of the functional core of the 30S ribosomal subunit. Helps release RbfA from mature subunits. May play a role in the assembly of ribosomal proteins into the subunit. Circularly permuted GTPase that catalyzes slow GTP hydrolysis, GTPase activity is stimulated by the 30S ribosomal subunit. The sequence is that of Small ribosomal subunit biogenesis GTPase RsgA from Alkaliphilus metalliredigens (strain QYMF).